Consider the following 232-residue polypeptide: Beta-casein (232 aa).

The signal sequence occupies residues 1–15 (MKVLILACRVALALA). A phosphoserine mark is found at Ser-30, Ser-32, Ser-33, and Ser-34.

Belongs to the beta-casein family. In terms of tissue distribution, mammary gland specific. Secreted in milk.

It localises to the secreted. Its function is as follows. Important role in determination of the surface properties of the casein micelles. The polypeptide is Beta-casein (CSN2) (Camelus dromedarius (Dromedary)).